A 386-amino-acid polypeptide reads, in one-letter code: Bifunctional chorismate mutase/prephenate dehydratase (386 aa).

The 92-residue stretch at 1-92 folds into the Chorismate mutase domain; sequence MTSENPLLAL…DSVLTQQALL (92 aa). The substrate site is built by Arg-11, Arg-28, Lys-39, Asp-48, Glu-52, Ser-84, and Gln-88. The 181-residue stretch at 105–285 folds into the Prephenate dehydratase domain; it reads RIAFLGPKGS…NFTRFVVLAR (181 aa). Positions 299 to 376 constitute an ACT domain; it reads TLLMATGQQA…RSMKVLGCYP (78 aa).

It is found in the cytoplasm. It catalyses the reaction chorismate = prephenate. The enzyme catalyses prephenate + H(+) = 3-phenylpyruvate + CO2 + H2O. It participates in amino-acid biosynthesis; L-phenylalanine biosynthesis; phenylpyruvate from prephenate: step 1/1. It functions in the pathway metabolic intermediate biosynthesis; prephenate biosynthesis; prephenate from chorismate: step 1/1. Its function is as follows. Catalyzes the Claisen rearrangement of chorismate to prephenate and the decarboxylation/dehydration of prephenate to phenylpyruvate. In Escherichia coli O157:H7, this protein is Bifunctional chorismate mutase/prephenate dehydratase (pheA).